Consider the following 389-residue polypeptide: Xylose isomerase (389 aa).

Active-site residues include His-101 and Asp-104. Mg(2+) is bound by residues Glu-232, Glu-268, His-271, Asp-296, Asp-307, and Asp-309.

It belongs to the xylose isomerase family. As to quaternary structure, homotetramer. It depends on Mg(2+) as a cofactor.

The protein localises to the cytoplasm. It catalyses the reaction alpha-D-xylose = alpha-D-xylulofuranose. This chain is Xylose isomerase, found in Lactococcus lactis subsp. cremoris (strain SK11).